The primary structure comprises 1076 residues: DNA-directed RNA polymerase subunit beta (1076 aa).

This sequence belongs to the RNA polymerase beta chain family. As to quaternary structure, in plastids the minimal PEP RNA polymerase catalytic core is composed of four subunits: alpha, beta, beta', and beta''. When a (nuclear-encoded) sigma factor is associated with the core the holoenzyme is formed, which can initiate transcription.

It localises to the plastid. Its subcellular location is the chloroplast. The catalysed reaction is RNA(n) + a ribonucleoside 5'-triphosphate = RNA(n+1) + diphosphate. Its function is as follows. DNA-dependent RNA polymerase catalyzes the transcription of DNA into RNA using the four ribonucleoside triphosphates as substrates. This Lolium perenne (Perennial ryegrass) protein is DNA-directed RNA polymerase subunit beta.